The following is a 246-amino-acid chain: DNA repair protein RecO (246 aa).

Belongs to the RecO family.

Functionally, involved in DNA repair and RecF pathway recombination. The polypeptide is DNA repair protein RecO (Nitrosococcus oceani (strain ATCC 19707 / BCRC 17464 / JCM 30415 / NCIMB 11848 / C-107)).